Reading from the N-terminus, the 179-residue chain is Dual-action ribosomal maturation protein DarP (179 aa).

Belongs to the DarP family.

The protein resides in the cytoplasm. Functionally, member of a network of 50S ribosomal subunit biogenesis factors which assembles along the 30S-50S interface, preventing incorrect 23S rRNA structures from forming. Promotes peptidyl transferase center (PTC) maturation. The polypeptide is Dual-action ribosomal maturation protein DarP (Aliivibrio fischeri (strain ATCC 700601 / ES114) (Vibrio fischeri)).